The chain runs to 489 residues: Rhamnulokinase (489 aa).

13-17 (ASSGR) is a binding site for ATP. The cysteines at positions 68 and 222 are disulfide-linked. Residues Gly-83 and 236–238 (HDT) contribute to the substrate site. Residue Asp-237 is the Proton acceptor of the active site. ATP is bound at residue Thr-259. Asn-296 lines the substrate pocket. Gln-304 serves as a coordination point for ATP. A disulfide bridge links Cys-353 with Cys-370. Gly-402 is an ATP binding site. Residues Cys-413 and Cys-417 are joined by a disulfide bond.

This sequence belongs to the rhamnulokinase family. In terms of assembly, monomer. Requires Mg(2+) as cofactor.

It carries out the reaction L-rhamnulose + ATP = L-rhamnulose 1-phosphate + ADP + H(+). Its pathway is carbohydrate degradation; L-rhamnose degradation; glycerone phosphate from L-rhamnose: step 2/3. In terms of biological role, involved in the catabolism of L-rhamnose (6-deoxy-L-mannose). Catalyzes the transfer of the gamma-phosphate group from ATP to the 1-hydroxyl group of L-rhamnulose to yield L-rhamnulose 1-phosphate. The chain is Rhamnulokinase from Escherichia coli O139:H28 (strain E24377A / ETEC).